The sequence spans 438 residues: DNA polymerase IV 1 (438 aa).

The region spanning 46 to 226 (LAHIDCDAFY…KPVTMIWGVG (181 aa)) is the UmuC domain. Positions 50 and 143 each coordinate Mg(2+). Glu-144 is a catalytic residue.

This sequence belongs to the DNA polymerase type-Y family. In terms of assembly, monomer. It depends on Mg(2+) as a cofactor.

It is found in the cytoplasm. It carries out the reaction DNA(n) + a 2'-deoxyribonucleoside 5'-triphosphate = DNA(n+1) + diphosphate. Poorly processive, error-prone DNA polymerase involved in untargeted mutagenesis. Copies undamaged DNA at stalled replication forks, which arise in vivo from mismatched or misaligned primer ends. These misaligned primers can be extended by PolIV. Exhibits no 3'-5' exonuclease (proofreading) activity. May be involved in translesional synthesis, in conjunction with the beta clamp from PolIII. In Mesorhizobium japonicum (strain LMG 29417 / CECT 9101 / MAFF 303099) (Mesorhizobium loti (strain MAFF 303099)), this protein is DNA polymerase IV 1 (dinB1).